The following is a 109-amino-acid chain: Phosphoribosyl-ATP pyrophosphatase (109 aa).

Belongs to the PRA-PH family.

It localises to the cytoplasm. The catalysed reaction is 1-(5-phospho-beta-D-ribosyl)-ATP + H2O = 1-(5-phospho-beta-D-ribosyl)-5'-AMP + diphosphate + H(+). It participates in amino-acid biosynthesis; L-histidine biosynthesis; L-histidine from 5-phospho-alpha-D-ribose 1-diphosphate: step 2/9. The protein is Phosphoribosyl-ATP pyrophosphatase of Sphingopyxis alaskensis (strain DSM 13593 / LMG 18877 / RB2256) (Sphingomonas alaskensis).